We begin with the raw amino-acid sequence, 323 residues long: MSGKPPAIFLMGPTAAGKTDLAIELTKVLPCELISVDSALVYRGMDIGTAKPSKEILAAHPHRLIDILDPVESYSAKQFCTDALDAMAEITARGKIPLLVGGTMLYYKALVEGLADMPPADAAVRAELEAQASALGLGELHRQLAEVDPESAARIHPNDPQRLIRALEVYRVSGESMTAHRQRQFAESRGADAGANGHLPYTVASLAIAPTDRHILHQRIALRFSQMLEQGFVDEVRSLRARSDLHAGLPSIRAVGYRQVWDYLDGHLTENEMQERGIIATRQLAKRQFTWLRGWDGVHWLDSLACDNLSRTLKYLGAVSILS.

Residue 12–19 (GPTAAGKT) coordinates ATP. Position 14 to 19 (14 to 19 (TAAGKT)) interacts with substrate. Interaction with substrate tRNA stretches follow at residues 37-40 (DSAL) and 161-165 (QRLIR).

The protein belongs to the IPP transferase family. In terms of assembly, monomer. Requires Mg(2+) as cofactor.

It catalyses the reaction adenosine(37) in tRNA + dimethylallyl diphosphate = N(6)-dimethylallyladenosine(37) in tRNA + diphosphate. Its function is as follows. Catalyzes the transfer of a dimethylallyl group onto the adenine at position 37 in tRNAs that read codons beginning with uridine, leading to the formation of N6-(dimethylallyl)adenosine (i(6)A). In Pseudomonas entomophila (strain L48), this protein is tRNA dimethylallyltransferase.